The chain runs to 508 residues: Protein adenylyltransferase Fic (508 aa).

Residues 48–70 (FYRFALFFIAGSFAAFSFHALTS) form a helical membrane-spanning segment. TPR repeat units follow at residues 132–165 (ALGA…APKH) and 166–200 (PEVL…CPSN). The Inhibitory (S/T)XXXE(G/N) motif signature appears at 257-262 (SVGIEG). ATP contacts are provided by residues E261 and 342–345 (VGGH). Residues 311-446 (ITIKDILELH…IRPFVRFIAD (136 aa)) form the Fido domain. H389 is an active-site residue. ATP contacts are provided by residues 393-400 (DGNGRTSR), 425-426 (YY), and N433.

Belongs to the fic family. In terms of assembly, homodimer.

Its subcellular location is the membrane. The catalysed reaction is L-tyrosyl-[protein] + ATP = O-(5'-adenylyl)-L-tyrosyl-[protein] + diphosphate. It catalyses the reaction L-threonyl-[protein] + ATP = 3-O-(5'-adenylyl)-L-threonyl-[protein] + diphosphate. The enzyme catalyses 3-O-(5'-adenylyl)-L-threonyl-[protein] + H2O = L-threonyl-[protein] + AMP + H(+). With respect to regulation, the side chain of Glu-261 determines which of the two opposing activities (AMPylase or de-AMPylase) will take place. In response to endoplasmic reticulum stress, mediates de-AMPylase activity. Adenylyltransferase activity is inhibited by the inhibitory helix present at the N-terminus: Glu-261 binds ATP and competes with ATP-binding at Arg-400, thereby preventing adenylyltransferase activity. In unstressed cells, disengagement of Glu-261 promotes adenylyltransferase activity. Activation dissociates ATP-binding from Glu-261, allowing ordered binding of the entire ATP moiety with the alpha-phosphate in an orientation that is productive for accepting an incoming target hydroxyl side chain. Functionally, protein that can both mediate the addition of adenosine 5'-monophosphate (AMP) to specific residues of target proteins (AMPylation), and the removal of the same modification from target proteins (de-AMPylation), depending on the context. The side chain of Glu-261 determines which of the two opposing activities (AMPylase or de-AMPylase) will take place. Acts as a key regulator of the unfolded protein response (UPR) by mediating AMPylation or de-AMPylation of Hsc70-3/BiP. In unstressed cells, acts as an adenylyltransferase by mediating AMPylation of Hsc70-3/BiP at 'Thr-518', thereby inactivating it. In response to endoplasmic reticulum stress, acts as a phosphodiesterase by mediating removal of ATP (de-AMPylation) from Hsc70-3/BiP at 'Thr-518', leading to restore HSPA5/BiP activity. This chain is Protein adenylyltransferase Fic, found in Drosophila persimilis (Fruit fly).